Reading from the N-terminus, the 95-residue chain is Co-chaperonin GroES (95 aa).

This sequence belongs to the GroES chaperonin family. Heptamer of 7 subunits arranged in a ring. Interacts with the chaperonin GroEL.

The protein resides in the cytoplasm. In terms of biological role, together with the chaperonin GroEL, plays an essential role in assisting protein folding. The GroEL-GroES system forms a nano-cage that allows encapsulation of the non-native substrate proteins and provides a physical environment optimized to promote and accelerate protein folding. GroES binds to the apical surface of the GroEL ring, thereby capping the opening of the GroEL channel. The protein is Co-chaperonin GroES of Maricaulis maris (strain MCS10) (Caulobacter maris).